Here is a 444-residue protein sequence, read N- to C-terminus: MAVTTRLTWLHEKILQNHFGGKRLSLLYKGSVHGFRNGVLLDRCCNQGPTLTVIYSEDHIIGAYAEESYQEGKYASIILFALQDTKISEWKLGLCTPETLFCCDVTKYNSPTNFQIDGRNRKVIMDLKTMENLGLAQNCTISIQDYEVFRCEDSLDERKIKGVIELRKSLLSALRTYEPYGSLVQQIRILLLGPIGAGKSSFFNSVRSVFQGHVTHQALVGTNTTGISEKYRTYSIRDGKDGKYLPFILCDSLGLSEKEGGLCRDDIFYILNGNIRDRYQFNPMESIKLNHHDYIDSPSLKDRIHCVAFVFDASSIQYFSSQMIVKIKRIRRELVNAGVVHVALLTHVDSMDLITKGDLIEIERCEPVRSKLEEVQRKLGFALSDISVVSNYSSEWELDPVKDVLILSALRRMLWAADDFLEDLPFEQIGNLREEIINCAQGKK.

The TLDc domain maps to Met1–Glu152.

Belongs to the IFI44 family.

Its subcellular location is the cytoplasm. Functionally, this protein aggregates to form microtubular structures. The protein is Interferon-induced protein 44 (IFI44) of Homo sapiens (Human).